The chain runs to 198 residues: Photosystem I assembly protein Ycf4 (198 aa).

The interval 1-20 (MTASTTINKGDSPNGDSSAS) is disordered. 2 helical membrane-spanning segments follow: residues 38-58 (WASI…SSYL) and 78-98 (LVMG…WLAI).

The protein belongs to the Ycf4 family.

Its subcellular location is the cellular thylakoid membrane. In terms of biological role, seems to be required for the assembly of the photosystem I complex. This Trichormus variabilis (strain ATCC 29413 / PCC 7937) (Anabaena variabilis) protein is Photosystem I assembly protein Ycf4.